The sequence spans 395 residues: Elongation factor Tu (395 aa).

The 195-residue stretch at 10–204 (KPHVNIGTIG…TVDEYIPTPQ (195 aa)) folds into the tr-type G domain. Residues 19 to 26 (GHVDHGKT) form a G1 region. A GTP-binding site is contributed by 19–26 (GHVDHGKT). Threonine 26 contacts Mg(2+). The interval 60–64 (GITIN) is G2. Positions 81-84 (DAPG) are G3. GTP-binding positions include 81-85 (DAPGH) and 136-139 (NKCD). The interval 136–139 (NKCD) is G4. A G5 region spans residues 174–176 (SAL).

Belongs to the TRAFAC class translation factor GTPase superfamily. Classic translation factor GTPase family. EF-Tu/EF-1A subfamily. Monomer.

It is found in the cytoplasm. The enzyme catalyses GTP + H2O = GDP + phosphate + H(+). In terms of biological role, GTP hydrolase that promotes the GTP-dependent binding of aminoacyl-tRNA to the A-site of ribosomes during protein biosynthesis. This Ligilactobacillus salivarius (strain UCC118) (Lactobacillus salivarius) protein is Elongation factor Tu.